A 347-amino-acid chain; its full sequence is Molybdenum cofactor biosynthesis bifunctional protein (347 aa).

The molybdenum cofactor biosynthesis protein C stretch occupies residues 1–158 (MFTHLDENQQ…EKTGGKADVS (158 aa)). Substrate contacts are provided by residues 75–77 (FCH) and 116–117 (ME). Asp131 serves as the catalytic For MoaC activity. Residues 159–347 (QTPLYGLVLT…NSPEDYGQIN (189 aa)) form a molybdenum cofactor guanylyltransferase region. Residues 167 to 169 (LTG), Lys179, Asp226, and Asp255 each bind GTP. Mg(2+) is bound at residue Asp255.

This sequence in the N-terminal section; belongs to the MoaC family. It in the C-terminal section; belongs to the MobA family. Requires Mg(2+) as cofactor.

Its subcellular location is the cytoplasm. The catalysed reaction is Mo-molybdopterin + GTP + H(+) = Mo-molybdopterin guanine dinucleotide + diphosphate. It catalyses the reaction (8S)-3',8-cyclo-7,8-dihydroguanosine 5'-triphosphate = cyclic pyranopterin phosphate + diphosphate. It participates in cofactor biosynthesis; molybdopterin biosynthesis. Its function is as follows. Catalyzes the conversion of (8S)-3',8-cyclo-7,8-dihydroguanosine 5'-triphosphate to cyclic pyranopterin monophosphate (cPMP). In terms of biological role, transfers a GMP moiety from GTP to Mo-molybdopterin (Mo-MPT) cofactor (Moco or molybdenum cofactor) to form Mo-molybdopterin guanine dinucleotide (Mo-MGD) cofactor. The chain is Molybdenum cofactor biosynthesis bifunctional protein (moaC/mobA) from Synechocystis sp. (strain ATCC 27184 / PCC 6803 / Kazusa).